A 161-amino-acid polypeptide reads, in one-letter code: Calcium-binding protein CML24 (161 aa).

EF-hand domains lie at 13 to 48 (GSMDDIKKVFQRFDKNGDGKISVDELKEVIRALSPT), 49 to 84 (ASPEETVTMMKQFDLDGNGFIDLDEFVALFQIGIGG), 90 to 125 (NDVSDLKEAFELYDLDGNGRISAKELHSVMKNLGEK), and 126 to 161 (CSVQDCKKMISKVDIDGDGCVNFDEFKKMMSNGGGA). The Ca(2+) site is built by Asp26, Asn28, Asp30, Lys32, Glu37, Asp62, Asp64, Asn66, Glu73, Asp103, Asp105, Asn107, Arg109, Glu114, Asp139, Asp141, Asp143, Cys145, and Glu150.

Expressed in seed coat, seedling radical, cotyledons, hypocotyl, shoot apex and elongating root. Expressed in the vasculature of cotyledons, leaves and roots. Highly expressed in guard cells, trichomes and hydathodes. Expressed in inflorescence stem branch points, silique abscission zone, young and mature styles and stigmatic papillae, mature anthers and developing seed.

Functionally, calcium-binding protein that may positively regulate abscisic acid (ABA) inhibition of germination and seedling development. May be required for photoperiod-induced flowering and function in ion homeostasis. The sequence is that of Calcium-binding protein CML24 (CML24) from Arabidopsis thaliana (Mouse-ear cress).